Consider the following 306-residue polypeptide: Ribosomal protein L11 methyltransferase (306 aa).

Residues T154, G179, D201, and N242 each contribute to the S-adenosyl-L-methionine site.

Belongs to the methyltransferase superfamily. PrmA family.

The protein localises to the cytoplasm. It catalyses the reaction L-lysyl-[protein] + 3 S-adenosyl-L-methionine = N(6),N(6),N(6)-trimethyl-L-lysyl-[protein] + 3 S-adenosyl-L-homocysteine + 3 H(+). Functionally, methylates ribosomal protein L11. This Stenotrophomonas maltophilia (strain K279a) protein is Ribosomal protein L11 methyltransferase.